We begin with the raw amino-acid sequence, 367 residues long: Biotin synthase (367 aa).

In terms of domain architecture, Radical SAM core spans 73–308 (CCGNTVDLCS…EQIIRYAGGR (236 aa)). [4Fe-4S] cluster is bound by residues cysteine 91, cysteine 95, and cysteine 98. [2Fe-2S] cluster contacts are provided by cysteine 136, cysteine 173, cysteine 233, and arginine 303.

It belongs to the radical SAM superfamily. Biotin synthase family. Homodimer. It depends on [4Fe-4S] cluster as a cofactor. [2Fe-2S] cluster serves as cofactor.

It carries out the reaction (4R,5S)-dethiobiotin + (sulfur carrier)-SH + 2 reduced [2Fe-2S]-[ferredoxin] + 2 S-adenosyl-L-methionine = (sulfur carrier)-H + biotin + 2 5'-deoxyadenosine + 2 L-methionine + 2 oxidized [2Fe-2S]-[ferredoxin]. The protein operates within cofactor biosynthesis; biotin biosynthesis; biotin from 7,8-diaminononanoate: step 2/2. In terms of biological role, catalyzes the conversion of dethiobiotin (DTB) to biotin by the insertion of a sulfur atom into dethiobiotin via a radical-based mechanism. In Picosynechococcus sp. (strain ATCC 27264 / PCC 7002 / PR-6) (Agmenellum quadruplicatum), this protein is Biotin synthase.